Consider the following 397-residue polypeptide: Flavohemoprotein A (397 aa).

The Globin domain occupies 2-137 (SLSQQSISII…IAQAFIDAEA (136 aa)). His84 lines the heme b pocket. Catalysis depends on charge relay system residues Tyr94 and Glu136. Positions 150–397 (WRDTREFIVD…YEIFGPLTNV (248 aa)) are reductase. The FAD-binding FR-type domain maps to 151–266 (RDTREFIVDR…SPPAGDYVVD (116 aa)). Residues Tyr189 and 208-211 (RHYS) contribute to the FAD site. 279 to 284 (GVGITP) lines the NADP(+) pocket. Residue 390–393 (IFGP) coordinates FAD.

This sequence belongs to the globin family. Two-domain flavohemoproteins subfamily. It in the C-terminal section; belongs to the flavoprotein pyridine nucleotide cytochrome reductase family. The cofactor is FAD. It depends on heme b as a cofactor.

The protein resides in the cytoplasm. The catalysed reaction is 2 nitric oxide + NADPH + 2 O2 = 2 nitrate + NADP(+) + H(+). It carries out the reaction 2 nitric oxide + NADH + 2 O2 = 2 nitrate + NAD(+) + H(+). Is involved in NO detoxification in an aerobic process, termed nitric oxide dioxygenase (NOD) reaction that utilizes O(2) and NAD(P)H to convert NO to nitrate, which protects the cell from various noxious nitrogen compounds. Therefore, plays a central role in the inducible response to nitrosative stress. In terms of biological role, in the presence of oxygen and NADH, it has NADH oxidase activity, which leads to the generation of superoxide and H(2)O(2). Under anaerobic conditions, it also exhibits nitric oxide reductase and FAD reductase activities. However, all these reactions are much lower than NOD activity. The protein is Flavohemoprotein A (fhbA) of Dictyostelium discoideum (Social amoeba).